A 239-amino-acid polypeptide reads, in one-letter code: MEKAFDMNMIGDFVPTLTAYLPVTLYILTLSLLFGFVLGLFLALPRIYNIPIVNQLAKVYISFFRGTPIMVQLFIVFYGIPALTGLIGIDTSKMDPFYAAVATYALSNAAAAAEIIRAGVGSVDKGQTEAAYSIGLSGSQAFRRIVLPQALVQAFPNMGNMVISSLKDTSLAFSIGVMDMSGRGQTLITSSNHSLEVYIALSIVYYAVAVLFEWFFRVAEKRIKKNQTRIVTVFDMNIH.

The region spanning 21–216 (LPVTLYILTL…AVAVLFEWFF (196 aa)) is the ABC transmembrane type-1 domain. 4 consecutive transmembrane segments (helical) span residues 25–45 (LYILTLSLLFGFVLGLFLALP), 69–89 (IMVQLFIVFYGIPALTGLIGI), 96–116 (PFYAAVATYALSNAAAAAEII), and 196–216 (EVYIALSIVYYAVAVLFEWFF).

It belongs to the binding-protein-dependent transport system permease family. The complex is composed of two ATP-binding proteins (TcyN), two transmembrane proteins (TcyL and TcyM) and two solute-binding proteins (TcyJ and TcyK).

Its subcellular location is the cell membrane. In terms of biological role, part of the ABC transporter complex TcyJKLMN involved in L-cystine import. Probably responsible for the translocation of the substrate across the membrane. Is also involved in cystathionine, djenkolate, and S-methylcysteine transport. In Bacillus subtilis (strain 168), this protein is L-cystine transport system permease protein TcyL (tcyL).